The primary structure comprises 197 residues: uncharacterized protein (197 aa).

A disordered region spans residues 1–135; it reads MKTPWKFLAR…ERGKRANARV (135 aa). The span at 14–32 shows a compositional bias: polar residues; that stretch reads RQPSGKTQESSAGNDTGSK. Basic and acidic residues predominate over residues 83–96; the sequence is IHADEAQTTARDEA. Basic residues predominate over residues 116-132; the sequence is SQRKPRIKRRERGKRAN.

To Rhizobium NGR234A y4nF and y4aO.

This is an uncharacterized protein from Rhizobium meliloti (strain 1021) (Ensifer meliloti).